A 1921-amino-acid chain; its full sequence is MEPQRRELLAQCQQSLAQAMTEVEAVLGLLEAAGALSPGERRQLDEEAGGAKAELLLQLLLAKEQDHFQDLRAALEKTQPHLLPILYLNGVVGPPQSTEGAGSTYSVLSIMPSDSESSSSLSSVGTTGKAPSPPPLLTEQQANDTVENLSIQLRLMTRERNELRKRLAFATHGATFDKRPYHRLNPDYERLKIQCVRAMSDLQSLQNQHTNALKRCEEVAKETDFYHTLHSRLLSDQTQLKDDVDMLRRENGKLRRERNLLQQSWEDMKRLREEDQKEIGDLRAQQQQVLKHNGSSEILNKLYDTAMDKLEVVKKDYDALRKRYSEKVAMHNSDLSRLEQLGEENQRLQKQTEMLTQQRDTAIQLQHQCALSLRRFETIHHELSKATAQNKDLQWEMELLQSELTELRSKQVKTAKESEKYKEERDAVYSEYKLIMSERDQVISELDKLQTEVELAESKLKSSTSEKKAASEEMEALRQIKDTVTMDAGRANKEVEILRKQCKALCQELKEALQEADVAKCRRDWAFQERDKIVAERDSIRTLCDNLRRERDRAVSELAEALRSLDDTRKQKNDVSRELKELKEQMECQLEKEARFRQLMAHSSHDSAIDTDSMEWETEVVEFERETEDIDLKALGFDMAEGVNEPCFPGDCGIFVTKVDKGSIADGRLRVNDWLLRINDVDLINKDKKQAIKALLNGEGAINMVVRRRKSLGGKVVTPLHINLSGQKDSGISLENGVYAAAVVPGSPAAKEGSLAVGDRIVAINGIALDNKSLNECESLLRSCQDSLTLSLLKVFPQSSSWSGQNIFENIKDSDRMLSCRAHGPEVQAHNKRNLLQHNNSTQTDIFYTDRLEDRKELGHSGGSSSFLHKPFSGSSSPVSPQACPSTSERSLNSFRSDTSAERGYGLVDMRSQRPLLSFETEVGPCGAVEVPLDKIDPEGSNSGGTWPKAVLGSTSGPEKLSVYKKPKQRKSIFDPNTFKRPQTPPKIDYLLPGPGLTHSPQPSKRVGSLTPPKPPRRSDSIKFQHRLETSSESEATLVGSSPSTSPPSAPPPSMDPSEPTHASPPRKARVRIASSYHSEGDGDTSYLPAKKPCDEDLTSQKVDELGQKRRRPKSAPSFRPKISPVVIPAQCLEEQECVPAIGELSPEGQEWSPYSPGHASRHGNPLLYPNRPSVGTVPRSMTPGTTVGSILRNPIYTVRSHRVLPCGSPPVPRDAGSQSLSPSVQHQGRLSLDLSHRACSDYSEMRASQGSNSLPSSARLGSSSNLQFKAERIKIPLTPRYPRSVMGSDRGSLSHSECSTPPRSPLNIDTLSSCSQPQTTASTLPRIAVNPSSHGERRKDRPFVEEPRHVKVQKGSEPLGISIVSGEKGGVYVSKVTLGSIAHQAGLEYGDQLLEFNGINLRSATEQQARLIIGQQCDTITILAQYNPHIHQLNSHSRSSSHLDPAATPHSTLQGSSAGTPEHPSVIDPLMEQDEGPGTPPAKQSASSTRSVGDTTKKTPDPRIVFIKKSQLDLGVHLCGGNLHGVFVAEVEDDSPAKGPDGLVPGDLILEYGSLDMRSRTVEDVYVEMLKPKDSLRLKVQYRHEEFTRVKGLPGDSFYIRALYDRLAEVEPELSFKKDDILYVDDTLPQGVFGSWMAWQLDENAQKIQRGQIPSKYVMDQEFSRRLSMSEVKDDNTAKTLSAAARRSFFRRKHKHKRSGSKDGKDLLALDTFSNDSIPLFEDSVSLAYQRVQKVDCTSLRPVLLLGPLLDVVKEMLVNEAPGKFCRCPLEVMKASQQAIERGVKDCLFVDYKRRSGHFDVTTVASIKEITEKNRHCLLDIAPHAIERLHHMHIYPIVIFIRYKSAKHIKEQRDPVYLRDKVTQRHSKEQFETAQKIDQEYSRYFTGVVQGGALSSICTQILAMVSQEQSKVLWIPACPP.

The CARD domain occupies 1-90; it reads MEPQRRELLA…HLLPILYLNG (90 aa). The segment at 116–143 is disordered; that stretch reads ESSSSLSSVGTTGKAPSPPPLLTEQQAN. Residues 139–601 adopt a coiled-coil conformation; sequence EQQANDTVEN…KEARFRQLMA (463 aa). Phosphoserine occurs at positions 264 and 295. PDZ domains follow at residues 620-710 and 705-796; these read VVEF…RRRK and VVRR…LKVF. The tract at residues 857 to 898 is disordered; sequence ELGHSGGSSSFLHKPFSGSSSPVSPQACPSTSERSLNSFRSD. Polar residues predominate over residues 873–898; the sequence is SGSSSPVSPQACPSTSERSLNSFRSD. Residue serine 900 is modified to Phosphoserine. Residues 930 to 1121 are disordered; that stretch reads EVPLDKIDPE…RPKSAPSFRP (192 aa). Position 984 is a phosphothreonine (threonine 984). Serine 1000 bears the Phosphoserine mark. Phosphothreonine is present on threonine 1011. Residues 1017–1030 show a composition bias toward basic and acidic residues; the sequence is RRSDSIKFQHRLET. The residue at position 1021 (serine 1021) is a Phosphoserine. The span at 1045–1055 shows a compositional bias: pro residues; sequence TSPPSAPPPSM. Phosphothreonine is present on threonine 1183. 3 disordered regions span residues 1204–1227, 1243–1266, and 1280–1343; these read VLPCGSPPVPRDAGSQSLSPSVQH, YSEMRASQGSNSLPSSARLGSSSN, and PRYP…KDRP. Residue serine 1209 is modified to Phosphoserine. The segment covering 1217-1227 has biased composition (polar residues); that stretch reads GSQSLSPSVQH. Over residues 1252 to 1266 the composition is skewed to low complexity; that stretch reads SNSLPSSARLGSSSN. Residue serine 1263 is modified to Phosphoserine. The segment covering 1292–1324 has biased composition (polar residues); the sequence is GSLSHSECSTPPRSPLNIDTLSSCSQPQTTAST. Position 1334 is a phosphoserine (serine 1334). Residues 1350 to 1429 form the PDZ 3 domain; the sequence is HVKVQKGSEP…TITILAQYNP (80 aa). 3 stretches are compositionally biased toward polar residues: residues 1434-1443, 1450-1460, and 1483-1495; these read LNSHSRSSSH, PHSTLQGSSAG, and AKQSASSTRSVGD. Positions 1434–1501 are disordered; it reads LNSHSRSSSH…SVGDTTKKTP (68 aa). Positions 1504-1585 constitute a PDZ 4 domain; the sequence is RIVFIKKSQL…SLRLKVQYRH (82 aa). In terms of domain architecture, SH3 spans 1596 to 1664; the sequence is GDSFYIRALY…PSKYVMDQEF (69 aa). Serine 1669 carries the phosphoserine modification. The Guanylate kinase-like domain maps to 1724–1907; that stretch reads DSVSLAYQRV…ICTQILAMVS (184 aa).

It belongs to the MAGUK family. In terms of assembly, interacts with MPP1. Interacts with CTNNB1 and with the third SH3 domain of SORBS3 to form a ternary complex. Interacts (via coiled-coil domain) with MARK3. Interacts (via PDZ domain 3) with STK3/MST2 and STK4/MST1. Interacts with SCRIB. Interacts with CTNB1. Interacts with SMO and (via PDZ4 or guanylate kinase-like domain) with KIF7. In terms of tissue distribution, brain (at protein level).

It is found in the cell junction. The protein localises to the cell membrane. Its subcellular location is the postsynaptic density. The protein resides in the cytoplasm. It localises to the cytoskeleton. It is found in the cilium basal body. Functionally, acts as a regulator of the Hippo signaling pathway. Negatively regulates the Hippo signaling pathway by mediating the interaction of MARK3 with STK3/4, bringing them together to promote MARK3-dependent hyperphosphorylation and inactivation of STK3 kinase activity toward LATS1. Positively regulates the Hippo signaling by mediating the interaction of SCRIB with STK4/MST1 and LATS1 which is important for the activation of the Hippo signaling pathway. Involved in regulating cell proliferation, maintenance of epithelial polarity, epithelial-mesenchymal transition (EMT), cell migration and invasion. Plays an important role in dendritic spine formation and synaptogenesis in cortical neurons; regulates synaptogenesis by enhancing the cell surface localization of N-cadherin. Acts as a positive regulator of hedgehog (Hh) signaling pathway. Plays a critical role in the early point of the SMO activity cycle by interacting with SMO at the ciliary base to induce the accumulation of KIF7 and GLI2 at the ciliary tip for GLI2 activation. This Mus musculus (Mouse) protein is Disks large homolog 5 (Dlg5).